Reading from the N-terminus, the 158-residue chain is UPF0225 protein Pput_1155 (158 aa).

It belongs to the UPF0225 family.

The polypeptide is UPF0225 protein Pput_1155 (Pseudomonas putida (strain ATCC 700007 / DSM 6899 / JCM 31910 / BCRC 17059 / LMG 24140 / F1)).